The following is a 422-amino-acid chain: Signal recognition particle receptor FtsY (422 aa).

Residues 39–86 form a disordered region; that stretch reads PERGVVDRSGGYTASSGITFSQTPTTQPAERIDTSGLPAVGDDATVPR. A compositionally biased stretch (polar residues) spans 50–66; that stretch reads YTASSGITFSQTPTTQP. GTP-binding positions include 230–237, 312–316, and 374–377; these read GVNGTGKT, DTAGR, and TKLD.

Belongs to the GTP-binding SRP family. FtsY subfamily. As to quaternary structure, part of the signal recognition particle protein translocation system, which is composed of SRP and FtsY.

It is found in the cell membrane. The protein localises to the cytoplasm. The catalysed reaction is GTP + H2O = GDP + phosphate + H(+). Involved in targeting and insertion of nascent membrane proteins into the cytoplasmic membrane. Acts as a receptor for the complex formed by the signal recognition particle (SRP) and the ribosome-nascent chain (RNC). The chain is Signal recognition particle receptor FtsY from Mycobacterium bovis (strain ATCC BAA-935 / AF2122/97).